A 719-amino-acid chain; its full sequence is Polyribonucleotide nucleotidyltransferase (719 aa).

Mg(2+)-binding residues include Asp-487 and Asp-493. Residues 554–613 (PRIETFKIATDKIREVIGTGGKVIREIVEKTGAKVNIEDDGTVKVASSDGEAMKAAIKWI) enclose the KH domain. The S1 motif domain maps to 623–691 (GQIYDGTVVK…DRGKTRLSMK (69 aa)). Residues 691–719 (KVVDQTTGEDLEAKQKDAPAEAPREAAGE) form a disordered region. Residues 701-719 (LEAKQKDAPAEAPREAAGE) are compositionally biased toward basic and acidic residues.

The protein belongs to the polyribonucleotide nucleotidyltransferase family. It depends on Mg(2+) as a cofactor.

It localises to the cytoplasm. It carries out the reaction RNA(n+1) + phosphate = RNA(n) + a ribonucleoside 5'-diphosphate. In terms of biological role, involved in mRNA degradation. Catalyzes the phosphorolysis of single-stranded polyribonucleotides processively in the 3'- to 5'-direction. The sequence is that of Polyribonucleotide nucleotidyltransferase from Bradyrhizobium sp. (strain ORS 278).